The following is a 176-amino-acid chain: ATP-dependent protease subunit HslV (176 aa).

The active site involves threonine 2. Na(+)-binding residues include glycine 157, cysteine 160, and threonine 163.

It belongs to the peptidase T1B family. HslV subfamily. A double ring-shaped homohexamer of HslV is capped on each side by a ring-shaped HslU homohexamer. The assembly of the HslU/HslV complex is dependent on binding of ATP.

It is found in the cytoplasm. The enzyme catalyses ATP-dependent cleavage of peptide bonds with broad specificity.. Its activity is regulated as follows. Allosterically activated by HslU binding. Protease subunit of a proteasome-like degradation complex believed to be a general protein degrading machinery. In Pseudomonas fluorescens (strain ATCC BAA-477 / NRRL B-23932 / Pf-5), this protein is ATP-dependent protease subunit HslV.